The following is a 247-amino-acid chain: Mannose-specific lectin CML-2 (247 aa).

2 residues coordinate a carbohydrate: D87 and G107. An N-linked (GlcNAc...) asparagine glycan is attached at N119. Mn(2+) is bound by residues E129 and D131. D131 and F133 together coordinate Ca(2+). A carbohydrate-binding residues include S138 and N139. Ca(2+) is bound by residues N139 and D142. The Mn(2+) site is built by D142 and H147. 3 residues coordinate a carbohydrate: G221, E222, and Q223.

The protein belongs to the leguminous lectin family. Homodimer; non-covalently linked. Post-translationally, glycosylated.

In terms of biological role, mannose-specific lectin. Also binds alpha-methyl-D-mannoside, D-glucose, N-acetyl-D-glucosamine and sucrose but not D-galactose, D-arabinose, D-fructose, D-xylose, lactose or glycoproteins fetiun, PSM and ovalbumin. Shows agglutinating activity towards rabbit erythrocytes. This chain is Mannose-specific lectin CML-2, found in Centrolobium microchaete (Canarywood tree).